The sequence spans 161 residues: Phosphopantetheine adenylyltransferase (161 aa).

A substrate-binding site is contributed by S9. Residues 9-10 (SF) and H17 each bind ATP. Positions 41, 74, and 88 each coordinate substrate. ATP is bound by residues 89 to 91 (GVR), E99, and 124 to 130 (NSFVASS).

Belongs to the bacterial CoaD family. As to quaternary structure, homohexamer. Requires Mg(2+) as cofactor.

It localises to the cytoplasm. It carries out the reaction (R)-4'-phosphopantetheine + ATP + H(+) = 3'-dephospho-CoA + diphosphate. It participates in cofactor biosynthesis; coenzyme A biosynthesis; CoA from (R)-pantothenate: step 4/5. In terms of biological role, reversibly transfers an adenylyl group from ATP to 4'-phosphopantetheine, yielding dephospho-CoA (dPCoA) and pyrophosphate. The sequence is that of Phosphopantetheine adenylyltransferase from Lactobacillus acidophilus (strain ATCC 700396 / NCK56 / N2 / NCFM).